The following is a 159-amino-acid chain: Defense protein l(2)34Fc (159 aa).

The signal sequence occupies residues 1 to 17 (MFRLLVLAACLAISVHA). The Reelin domain maps to 18-159 (YSDGAPKAAC…GRVTKDIDVE (142 aa)). The cysteines at positions 27 and 99 are disulfide-linked.

The protein belongs to the insect defense protein family.

Its subcellular location is the secreted. In terms of biological role, may have antimicrobial activity. A late response immune regulated gene that is negatively regulated by spz during the immune response. The polypeptide is Defense protein l(2)34Fc (l(2)34Fc) (Drosophila melanogaster (Fruit fly)).